A 421-amino-acid chain; its full sequence is ATP-dependent RNA helicase eIF4A (421 aa).

A disordered region spans residues 1–26 (MSNDKGLEEIPEDQSTTPHKPTSNVG). Polar residues predominate over residues 13–26 (DQSTTPHKPTSNVG). The Q motif motif lies at 48-76 (DSFDAMELKPELLRGVYAYGFERPSAIQQ). In terms of domain architecture, Helicase ATP-binding spans 79–249 (IKPIIKGSDV…TKFMRDPVRI (171 aa)). 92–99 (AQSGTGKT) is an ATP binding site. A DEAD box motif is present at residues 197-200 (DEAD). Residues 260-421 (GIKQFYIAVE…EMPMNVADLI (162 aa)) enclose the Helicase C-terminal domain.

It belongs to the DEAD box helicase family. eIF4A subfamily. In terms of assembly, component of the eIF4F complex, which composition varies with external and internal environmental conditions. It is composed of at least eIF4A, eIF4E and eIF4G.

It localises to the cytoplasm. It catalyses the reaction ATP + H2O = ADP + phosphate + H(+). Functionally, ATP-dependent RNA helicase which is a subunit of the eIF4F complex involved in cap recognition and is required for mRNA binding to ribosome. In the current model of translation initiation, eIF4A unwinds RNA secondary structures in the 5'-UTR of mRNAs which is necessary to allow efficient binding of the small ribosomal subunit, and subsequent scanning for the initiator codon. The chain is ATP-dependent RNA helicase eIF4A (tif1) from Aspergillus oryzae (strain ATCC 42149 / RIB 40) (Yellow koji mold).